The following is a 511-amino-acid chain: ATP synthase subunit alpha 1 (511 aa).

174-181 (GDRQTGKT) contributes to the ATP binding site.

It belongs to the ATPase alpha/beta chains family. In terms of assembly, F-type ATPases have 2 components, CF(1) - the catalytic core - and CF(0) - the membrane proton channel. CF(1) has five subunits: alpha(3), beta(3), gamma(1), delta(1), epsilon(1). CF(0) has four main subunits: a(1), b(1), b'(1) and c(9-12).

The protein resides in the cell inner membrane. The enzyme catalyses ATP + H2O + 4 H(+)(in) = ADP + phosphate + 5 H(+)(out). Its function is as follows. Produces ATP from ADP in the presence of a proton gradient across the membrane. The alpha chain is a regulatory subunit. The protein is ATP synthase subunit alpha 1 of Chlorobium luteolum (strain DSM 273 / BCRC 81028 / 2530) (Pelodictyon luteolum).